Here is a 559-residue protein sequence, read N- to C-terminus: Asparagine--tRNA ligase, cytoplasmic (559 aa).

A Phosphoserine modification is found at Ser72. Residues Lys255 and Lys501 each carry the N6-acetyllysine modification.

Belongs to the class-II aminoacyl-tRNA synthetase family.

The protein localises to the cytoplasm. The catalysed reaction is tRNA(Asn) + L-asparagine + ATP = L-asparaginyl-tRNA(Asn) + AMP + diphosphate + H(+). This Bos taurus (Bovine) protein is Asparagine--tRNA ligase, cytoplasmic (NARS).